The primary structure comprises 352 residues: tRNA pseudouridine synthase D (352 aa).

Catalysis depends on Asp-81, which acts as the Nucleophile. Residues 157-303 (GVPNYFGTQR…MDHERRILRL (147 aa)) form the TRUD domain.

Belongs to the pseudouridine synthase TruD family.

It carries out the reaction uridine(13) in tRNA = pseudouridine(13) in tRNA. Responsible for synthesis of pseudouridine from uracil-13 in transfer RNAs. The polypeptide is tRNA pseudouridine synthase D (Pseudomonas putida (strain GB-1)).